The chain runs to 410 residues: Histidine--tRNA ligase (410 aa).

It belongs to the class-II aminoacyl-tRNA synthetase family. In terms of assembly, homodimer.

It localises to the cytoplasm. The catalysed reaction is tRNA(His) + L-histidine + ATP = L-histidyl-tRNA(His) + AMP + diphosphate + H(+). This Campylobacter hominis (strain ATCC BAA-381 / DSM 21671 / CCUG 45161 / LMG 19568 / NCTC 13146 / CH001A) protein is Histidine--tRNA ligase.